The primary structure comprises 90 residues: Probable Fe(2+)-trafficking protein (90 aa).

This sequence belongs to the Fe(2+)-trafficking protein family.

Its function is as follows. Could be a mediator in iron transactions between iron acquisition and iron-requiring processes, such as synthesis and/or repair of Fe-S clusters in biosynthetic enzymes. The sequence is that of Probable Fe(2+)-trafficking protein from Bordetella bronchiseptica (strain ATCC BAA-588 / NCTC 13252 / RB50) (Alcaligenes bronchisepticus).